The primary structure comprises 358 residues: Electron transfer flavoprotein subunit alpha, mitochondrial (358 aa).

Position 298-326 (298-326) interacts with FAD; that stretch reads LYMAFGVSGAIQHLAGMRDSKVIVAVNKD.

Belongs to the ETF alpha-subunit/FixB family. As to quaternary structure, heterodimer of an alpha and a beta subunit. Requires FAD as cofactor.

It localises to the mitochondrion matrix. The electron transfer flavoprotein serves as a specific electron acceptor for several dehydrogenases, including five acyl-CoA dehydrogenases, glutaryl-CoA and sarcosine dehydrogenase. It transfers the electrons to the main mitochondrial respiratory chain via ETF-ubiquinone oxidoreductase (ETF dehydrogenase). This Oryza sativa subsp. indica (Rice) protein is Electron transfer flavoprotein subunit alpha, mitochondrial (ETFA).